We begin with the raw amino-acid sequence, 233 residues long: UPF0502 protein Sden_2282 (233 aa).

The span at 178-198 (TQHQRPPQTPHLSSRTNVDNS) shows a compositional bias: polar residues. The interval 178-204 (TQHQRPPQTPHLSSRTNVDNSYESDER) is disordered.

It belongs to the UPF0502 family.

This is UPF0502 protein Sden_2282 from Shewanella denitrificans (strain OS217 / ATCC BAA-1090 / DSM 15013).